We begin with the raw amino-acid sequence, 139 residues long: Large ribosomal subunit protein uL16 (139 aa).

This sequence belongs to the universal ribosomal protein uL16 family. As to quaternary structure, part of the 50S ribosomal subunit.

Functionally, binds 23S rRNA and is also seen to make contacts with the A and possibly P site tRNAs. This Neorickettsia sennetsu (strain ATCC VR-367 / Miyayama) (Ehrlichia sennetsu) protein is Large ribosomal subunit protein uL16 (rplP).